The following is a 365-amino-acid chain: Peptide chain release factor 2 (365 aa).

N5-methylglutamine is present on Q249.

Belongs to the prokaryotic/mitochondrial release factor family. In terms of processing, methylated by PrmC. Methylation increases the termination efficiency of RF2.

The protein localises to the cytoplasm. In terms of biological role, peptide chain release factor 2 directs the termination of translation in response to the peptide chain termination codons UGA and UAA. The sequence is that of Peptide chain release factor 2 from Acholeplasma laidlawii (strain PG-8A).